The primary structure comprises 870 residues: NEDD4-like E3 ubiquitin-protein ligase WWP2 (870 aa).

One can recognise a C2 domain in the interval 1-117 (MASASSSRAG…KNNGGKMENT (117 aa)). A disordered region spans residues 150-300 (SVPNGSAVTD…QLPAAAQAPD (151 aa)). Polar residues predominate over residues 152-171 (PNGSAVTDGSQPPSRESSGT). Residues 198-208 (GGSARTATAAS) show a composition bias toward low complexity. The residue at position 211 (Ser-211) is a Phosphoserine. 2 stretches are compositionally biased toward polar residues: residues 222 to 235 (VKNS…NGTV) and 262 to 289 (SVSS…TSGT). Over residues 290-300 (QQLPAAAQAPD) the composition is skewed to low complexity. WW domains lie at 300 to 333 (DALP…RPLP), 330 to 363 (RPLP…RPTA), 405 to 437 (GPLP…DPRT), and 444 to 477 (PALP…DPRP). The 335-residue stretch at 536–870 (KPYDLRRRLY…IEETEGFGQE (335 aa)) folds into the HECT domain. Cys-838 (glycyl thioester intermediate) is an active-site residue.

Interacts with SCNN1A, SCNN1B, SCNN1G, WBP1, WBP2 and ATN1. Interacts with ERBB4, NDFIP1 and NDFIP2. Interacts with ARRDC4. Interacts with POU5F1, RBP1, EGR2 and SLC11A2. Interacts (via WW domains) with ARRDC1 (via PPxY motifs); ubiquitinates ARRDC1. Interacts (via WW domains) with ARRDC2 and ARRDC3. In terms of processing, autoubiquitinated. Ubiquitinated by the SCF(FBXL15) complex, leading to its degradation by the proteasome.

The protein localises to the nucleus. The catalysed reaction is S-ubiquitinyl-[E2 ubiquitin-conjugating enzyme]-L-cysteine + [acceptor protein]-L-lysine = [E2 ubiquitin-conjugating enzyme]-L-cysteine + N(6)-ubiquitinyl-[acceptor protein]-L-lysine.. It participates in protein modification; protein ubiquitination. Its activity is regulated as follows. Activated by NDFIP1- and NDFIP2-binding. Functionally, E3 ubiquitin-protein ligase which accepts ubiquitin from an E2 ubiquitin-conjugating enzyme in the form of a thioester and then directly transfers the ubiquitin to targeted substrates. Polyubiquitinates POU5F1 by 'Lys-63'-linked conjugation and promotes it to proteasomal degradation; regulates POU5F1 protein level during differentiation of embryonal carcinoma cells (ECCs) but not in undifferentiated ECCs and embryonic stem cells (ESCs). Ubiquitinates EGR2 and promotes it to proteasomal degradation; in T-cells the ubiquitination inhibits activation-induced cell death. Ubiquitinates SLC11A2; the ubiquitination is enhanced by presence of NDFIP1 and NDFIP2. Ubiquitinates RPB1 and promotes it to proteasomal degradation. The chain is NEDD4-like E3 ubiquitin-protein ligase WWP2 (Wwp2) from Mus musculus (Mouse).